The primary structure comprises 2152 residues: Oxygen-regulated protein 1 (2152 aa).

Polar residues predominate over residues 1–19 (MSDTPSTGFSIIHPTSSED). The interval 1–25 (MSDTPSTGFSIIHPTSSEDQVPPPR) is disordered. Doublecortin domains are found at residues 36–118 (KRIS…VDLD) and 154–233 (RSLV…GNYD). Disordered regions lie at residues 353–375 (VSKT…RTES), 1435–1455 (DMEE…MTSS), and 1587–1616 (DWSD…ELAQ).

In terms of assembly, interacts (via the doublecortin domains) with microtubules. Interacts with RP1L1. Interacts with MAK.

It is found in the cytoplasm. It localises to the cytoskeleton. The protein localises to the cilium axoneme. Its subcellular location is the cell projection. The protein resides in the cilium. It is found in the photoreceptor outer segment. Its function is as follows. Microtubule-associated protein regulating the stability and length of the microtubule-based axoneme of photoreceptors. Required for the differentiation of photoreceptor cells, it plays a role in the organization of the outer segment of rod and cone photoreceptors ensuring the correct orientation and higher-order stacking of outer segment disks along the photoreceptor axoneme. In Papio hamadryas (Hamadryas baboon), this protein is Oxygen-regulated protein 1 (RP1).